We begin with the raw amino-acid sequence, 261 residues long: Secreted RxLR effector protein 154 (261 aa).

Positions 1 to 18 (MRRCALLFRLFLISYSCS) are cleaved as a signal peptide. The RxLR-dEER signature appears at 49-64 (RILQADDPEHIRTEER).

This sequence belongs to the RxLR effector family.

The protein resides in the secreted. Its subcellular location is the host cell membrane. Secreted effector that completely suppresses the host cell death induced by cell death-inducing proteins. The protein is Secreted RxLR effector protein 154 of Plasmopara viticola (Downy mildew of grapevine).